Here is a 591-residue protein sequence, read N- to C-terminus: Aspartate--tRNA(Asp/Asn) ligase (591 aa).

Glu-175 is an L-aspartate binding site. The tract at residues 199-202 (QQFK) is aspartate. L-aspartate is bound by residues Arg-221 and His-453. 221–223 (RDE) serves as a coordination point for ATP. Position 486 (Glu-486) interacts with ATP. L-aspartate is bound at residue Arg-493. 538–541 (GIDR) provides a ligand contact to ATP.

Belongs to the class-II aminoacyl-tRNA synthetase family. Type 1 subfamily. In terms of assembly, homodimer.

It is found in the cytoplasm. The catalysed reaction is tRNA(Asx) + L-aspartate + ATP = L-aspartyl-tRNA(Asx) + AMP + diphosphate. Aspartyl-tRNA synthetase with relaxed tRNA specificity since it is able to aspartylate not only its cognate tRNA(Asp) but also tRNA(Asn). Reaction proceeds in two steps: L-aspartate is first activated by ATP to form Asp-AMP and then transferred to the acceptor end of tRNA(Asp/Asn). The sequence is that of Aspartate--tRNA(Asp/Asn) ligase from Cereibacter sphaeroides (strain ATCC 17029 / ATH 2.4.9) (Rhodobacter sphaeroides).